The following is a 150-amino-acid chain: Arginine repressor (150 aa).

The protein belongs to the ArgR family.

The protein localises to the cytoplasm. The protein operates within amino-acid biosynthesis; L-arginine biosynthesis [regulation]. Functionally, regulates arginine biosynthesis genes. This is Arginine repressor from Staphylococcus aureus (strain Mu3 / ATCC 700698).